The primary structure comprises 1205 residues: PAN2-PAN3 deadenylation complex catalytic subunit Pan2 (1205 aa).

WD repeat units follow at residues 153-193, 195-231, 244-280, and 328-367; these read DESE…QKYA, ETPG…VEHE, VHGN…AITP, and PVGP…SFNP. The interval 368 to 484 is linker; it reads YSRETEFALP…PTGREEEPLH (117 aa). The USP domain maps to 485–924; that stretch reads TVSKKYRKVT…VPAILYYVKR (440 aa). Ser-784 bears the Phosphoserine mark. In terms of domain architecture, Exonuclease spans 975 to 1147; sequence VGLDAEFVTL…EDARTALQLY (173 aa). Residues Asp-978, Glu-980, Asp-1087, and Asp-1139 each coordinate a divalent metal cation. Positions 1179–1205 are disordered; that stretch reads WKVPEPESQSSPKSKAGLRPGALGWVG. The segment covering 1184 to 1193 has biased composition (low complexity); that stretch reads PESQSSPKSK. Position 1189 is a phosphoserine (Ser-1189).

The protein belongs to the peptidase C19 family. PAN2 subfamily. In terms of assembly, forms a heterotrimer with an asymmetric homodimer of the regulatory subunit PAN3 to form the poly(A)-nuclease (PAN) deadenylation complex. Interacts with PAN3 isoform 1/Pan3L and isoform 3/Pan3S. Interacts with ZFP36. Requires a divalent metal cation as cofactor.

It is found in the cytoplasm. Its subcellular location is the P-body. It localises to the nucleus. The enzyme catalyses Exonucleolytic cleavage of poly(A) to 5'-AMP.. Its activity is regulated as follows. Positively regulated by the regulatory subunit PAN3. Catalytic subunit of the poly(A)-nuclease (PAN) deadenylation complex, one of two cytoplasmic mRNA deadenylases involved in general and miRNA-mediated mRNA turnover. PAN specifically shortens poly(A) tails of RNA and the activity is stimulated by poly(A)-binding protein (PABP). PAN deadenylation is followed by rapid degradation of the shortened mRNA tails by the CCR4-NOT complex. Deadenylated mRNAs are then degraded by two alternative mechanisms, namely exosome-mediated 3'-5' exonucleolytic degradation, or deadenylation-dependent mRNA decaping and subsequent 5'-3' exonucleolytic degradation by XRN1. Also acts as an important regulator of the HIF1A-mediated hypoxic response. Required for HIF1A mRNA stability independent of poly(A) tail length regulation. This chain is PAN2-PAN3 deadenylation complex catalytic subunit Pan2, found in Rattus norvegicus (Rat).